We begin with the raw amino-acid sequence, 431 residues long: 5'-deoxyadenosine deaminase (431 aa).

Positions 65 and 67 each coordinate Zn(2+). Residues Glu94 and His185 each contribute to the substrate site. His212 lines the Zn(2+) pocket. Residues Glu215 and Asp300 each contribute to the substrate site. A Zn(2+)-binding site is contributed by Asp300.

It belongs to the metallo-dependent hydrolases superfamily. MTA/SAH deaminase family. As to quaternary structure, homotetramer. The cofactor is Zn(2+).

The catalysed reaction is 5'-deoxyadenosine + H2O + H(+) = 5'-deoxyinosine + NH4(+). It carries out the reaction S-adenosyl-L-homocysteine + H2O + H(+) = S-inosyl-L-homocysteine + NH4(+). The enzyme catalyses S-methyl-5'-thioadenosine + H2O + H(+) = S-methyl-5'-thioinosine + NH4(+). It catalyses the reaction adenosine + H2O + H(+) = inosine + NH4(+). It participates in amino-acid biosynthesis; S-adenosyl-L-methionine biosynthesis. In terms of biological role, catalyzes the deamination of three SAM-derived enzymatic products, namely 5'-deoxyadenosine, S-adenosyl-L-homocysteine, and 5'-methylthioadenosine, to produce the inosine analogs. Can also deaminate adenosine. The preferred substrate for this enzyme is 5'-deoxyadenosine, but all these substrates are efficiently deaminated. Likely functions in a S-adenosyl-L-methionine (SAM) recycling pathway from S-adenosyl-L-homocysteine (SAH) produced from SAM-dependent methylation reactions. May also be involved in the recycling of 5'-deoxyadenosine, whereupon the 5'-deoxyribose moiety of 5'-deoxyinosine is further metabolized to deoxyhexoses used for the biosynthesis of aromatic amino acids in methanogens. The polypeptide is 5'-deoxyadenosine deaminase (Methanopyrus kandleri (strain AV19 / DSM 6324 / JCM 9639 / NBRC 100938)).